The primary structure comprises 261 residues: MLIHPQFDPAAIRFGSFAIHWYGVMYLLAFAQFLLLGRLRIRAPRYQTLGWTYKDLEDLLFAGVLGVVLGGRLGYTLFYMPGYYLANPLSILKIWEGGMSFHGGLLGVLCALLWFAKKRHTSFFVVSDLVAPLIPFGLAFGRLGNFINGELWGRPTDLPWAMIFPMVDSIPRHPSQIYQLLGEGIFLGIVLWIYSSKPRPIGRVSGLFLLGYGICRFLAEFAREPDAFLGLLGLGLSMGQWLCVPMIILGVYLLRRNSTDT.

4 consecutive transmembrane segments (helical) span residues 17–37, 59–79, 94–114, and 121–141; these read FAIH…LLLG, LLFA…TLFY, IWEG…ALLW, and TSFF…LAFG. Residue Arg-142 coordinates a 1,2-diacyl-sn-glycero-3-phospho-(1'-sn-glycerol). A run of 2 helical transmembrane segments spans residues 174 to 194 and 228 to 248; these read PSQI…LWIY and FLGL…PMII.

The protein belongs to the Lgt family.

It is found in the cell inner membrane. It catalyses the reaction L-cysteinyl-[prolipoprotein] + a 1,2-diacyl-sn-glycero-3-phospho-(1'-sn-glycerol) = an S-1,2-diacyl-sn-glyceryl-L-cysteinyl-[prolipoprotein] + sn-glycerol 1-phosphate + H(+). The protein operates within protein modification; lipoprotein biosynthesis (diacylglyceryl transfer). Functionally, catalyzes the transfer of the diacylglyceryl group from phosphatidylglycerol to the sulfhydryl group of the N-terminal cysteine of a prolipoprotein, the first step in the formation of mature lipoproteins. This Polynucleobacter asymbioticus (strain DSM 18221 / CIP 109841 / QLW-P1DMWA-1) (Polynucleobacter necessarius subsp. asymbioticus) protein is Phosphatidylglycerol--prolipoprotein diacylglyceryl transferase.